Consider the following 82-residue polypeptide: UPF0335 protein pRhico085 (82 aa).

This sequence belongs to the UPF0335 family.

The chain is UPF0335 protein pRhico085 from Azospirillum brasilense.